A 613-amino-acid polypeptide reads, in one-letter code: Ribosome-associated molecular chaperone SSB1 (613 aa).

A nucleotide binding domain (NBD) region spans residues 1-391 (MAEGVFPGAI…ILTGQSTSDE (391 aa)). ATP-binding positions include 16 to 18 (TTY), K73, 205 to 207 (GGT), 271 to 278 (ERAKRTLS), and G342. Positions 392–402 (TKDLLLLDVAP) are inter-domain linker. Positions 403-613 (LSLGVGMAGD…RAVTKAMSTR (211 aa)) are substrate binding domain (SBD). Residues 516–612 (SEEIEQMVNQ…KRAVTKAMST (97 aa)) form a lid domain (SBDalpha) region. The short motif at 574 to 582 (VEAALADAF) is the Nuclear export signal element.

Belongs to the heat shock protein 70 family. Ssb-type Hsp70 subfamily. As to quaternary structure, binds to ribosomes. Binds close to the ribosomal tunnel exit via contacts with both ribosomal proteins and rRNA. Directly interacts with nascent polypeptides. This interaction is dependent on the ribosome-associated complex (RAC). Interacts with SSE1. Interacts with FES1.

The protein resides in the cytoplasm. The catalysed reaction is ATP + H2O = ADP + phosphate + H(+). Ribosome-bound, Hsp70-type chaperone that assists in the cotranslational folding of newly synthesized proteins in the cytosol. Stimulates folding by interacting with nascent chains, binding to short, largely hydrophobic sequences exposed by unfolded proteins, thereby stabilizing longer, more slowly translated, and aggregation-prone nascent polypeptides and domains that cannot fold stably until fully synthesized. The Hsp70-protein substrate interaction depends on ATP-binding and on allosteric regulation between the NBD and the SBD. The ATP-bound state is characterized by a fast exchange rate of substrate (low affinity state), while in the ADP-bound state exchange is much slower (high affinity state). During the Hsp70 cycle, the chaperone switches between the ATP-bound state (open conformation) and the ADP-bound state (closed conformation) by major conformational rearrangements involving mainly the lid domain. Ssb cooperates with a specific Hsp40/Hsp70 co-chaperone termed the ribosome-associated complex (RAC), which stimulates the ATPase activity of the ribosome-associated pool of Ssbs and switches it to the high affinity substrate binding state. Hsp110 chaperone SSE1 and FES1 act as nucleotide exchange factors that cause substrate release. The sequence is that of Ribosome-associated molecular chaperone SSB1 (SSB1) from Kluyveromyces marxianus (Yeast).